The primary structure comprises 684 residues: Cleavage and polyadenylation specificity factor subunit 3 (684 aa).

Residue S2 is modified to N-acetylserine. Zn(2+)-binding residues include H71, H73, D75, H76, H158, and D179. H396 (proton donor) is an active-site residue. Residue H418 participates in Zn(2+) binding. Residues K462, K465, and K545 each participate in a glycyl lysine isopeptide (Lys-Gly) (interchain with G-Cter in SUMO) cross-link. S659 bears the Phosphoserine mark. T681 is subject to Phosphothreonine.

It belongs to the metallo-beta-lactamase superfamily. RNA-metabolizing metallo-beta-lactamase-like family. CPSF3 subfamily. As to quaternary structure, component of the cleavage and polyadenylation specificity factor (CPSF) complex, composed of CPSF1, CPSF2, CPSF3, CPSF4 and FIP1L1. Interacts with CPSF2, CSTF2 and SYMPK. Interacts with TUT1; the interaction is direct and mediates the recruitment of the CPSF complex on the 3'UTR of pre-mRNAs. Interacts with WDR33. Interacts with ZC3H3. Requires Zn(2+) as cofactor. In terms of processing, sumoylated on Lys-462, Lys-465 and Lys-545, preferentially by SUMO3.

It is found in the nucleus. Functionally, component of the cleavage and polyadenylation specificity factor (CPSF) complex that plays a key role in pre-mRNA 3'-end formation, recognizing the AAUAAA signal sequence and interacting with poly(A) polymerase and other factors to bring about cleavage and poly(A) addition. Has endonuclease activity, and functions as an mRNA 3'-end-processing endonuclease. Also involved in the histone 3'-end pre-mRNA processing. U7 snRNP-dependent protein that induces both the 3'-endoribonucleolytic cleavage of histone pre-mRNAs and acts as a 5' to 3' exonuclease for degrading the subsequent downstream cleavage product (DCP) of mature histone mRNAs. Cleavage occurs after the 5'-ACCCA-3' sequence in the histone pre-mRNA leaving a 3'hydroxyl group on the upstream fragment containing the stem loop (SL) and 5' phosphate on the downstream cleavage product (DCP) starting with CU nucleotides. The U7-dependent 5' to 3' exonuclease activity is processive and degrades the DCP RNA substrate even after complete removal of the U7-binding site. Binds to the downstream cleavage product (DCP) of histone pre-mRNAs and the cleaved DCP RNA substrate in a U7 snRNP dependent manner. Required for entering/progressing through S-phase of the cell cycle. Required for the selective processing of microRNAs (miRNAs) during embryonic stem cell differentiation via its interaction with ISY1. Required for the biogenesis of all miRNAs from the pri-miR-17-92 primary transcript except miR-92a. Only required for the biogenesis of miR-290 and miR-96 from the pri-miR-290-295 and pri-miR-96-183 primary transcripts, respectively. The chain is Cleavage and polyadenylation specificity factor subunit 3 (CPSF3) from Bos taurus (Bovine).